The chain runs to 235 residues: Small ribosomal subunit protein eS4 (235 aa).

Residues 38–99 (VTLLSIIRDY…GESYRVVYND (62 aa)) form the S4 RNA-binding domain.

This sequence belongs to the eukaryotic ribosomal protein eS4 family.

The protein is Small ribosomal subunit protein eS4 (rps4e) of Thermoplasma acidophilum (strain ATCC 25905 / DSM 1728 / JCM 9062 / NBRC 15155 / AMRC-C165).